A 215-amino-acid chain; its full sequence is 3,4-dihydroxy-2-butanone 4-phosphate synthase (215 aa).

D-ribulose 5-phosphate is bound by residues 38–39 (RE), aspartate 43, 151–155 (RRGHT), and glutamate 175. Glutamate 39 contacts Mg(2+). A Mg(2+)-binding site is contributed by histidine 154.

It belongs to the DHBP synthase family. In terms of assembly, homodimer. Requires Mg(2+) as cofactor. The cofactor is Mn(2+).

The enzyme catalyses D-ribulose 5-phosphate = (2S)-2-hydroxy-3-oxobutyl phosphate + formate + H(+). Its pathway is cofactor biosynthesis; riboflavin biosynthesis; 2-hydroxy-3-oxobutyl phosphate from D-ribulose 5-phosphate: step 1/1. Its function is as follows. Catalyzes the conversion of D-ribulose 5-phosphate to formate and 3,4-dihydroxy-2-butanone 4-phosphate. The chain is 3,4-dihydroxy-2-butanone 4-phosphate synthase from Haemophilus influenzae (strain PittEE).